Reading from the N-terminus, the 165-residue chain is Large ribosomal subunit protein uL11A (165 aa).

Arginine 67 is modified (N5-methylarginine).

This sequence belongs to the universal ribosomal protein uL11 family. In terms of assembly, component of the large ribosomal subunit (LSU). Mature yeast ribosomes consist of a small (40S) and a large (60S) subunit. The 40S small subunit contains 1 molecule of ribosomal RNA (18S rRNA) and at least 33 different proteins. The large 60S subunit contains 3 rRNA molecules (25S, 5.8S and 5S rRNA) and at least 46 different proteins.

It is found in the cytoplasm. The protein localises to the nucleus. Its subcellular location is the nucleolus. In terms of biological role, this protein binds directly to 26S ribosomal RNA. Component of the ribosome, a large ribonucleoprotein complex responsible for the synthesis of proteins in the cell. The small ribosomal subunit (SSU) binds messenger RNAs (mRNAs) and translates the encoded message by selecting cognate aminoacyl-transfer RNA (tRNA) molecules. The large subunit (LSU) contains the ribosomal catalytic site termed the peptidyl transferase center (PTC), which catalyzes the formation of peptide bonds, thereby polymerizing the amino acids delivered by tRNAs into a polypeptide chain. The nascent polypeptides leave the ribosome through a tunnel in the LSU and interact with protein factors that function in enzymatic processing, targeting, and the membrane insertion of nascent chains at the exit of the ribosomal tunnel. This Schizosaccharomyces pombe (strain 972 / ATCC 24843) (Fission yeast) protein is Large ribosomal subunit protein uL11A (rpl1201).